A 276-amino-acid chain; its full sequence is Insulin-like growth factor-binding protein 2-A (276 aa).

Residues 1–22 (MLSYVSCGLLLALVTFHGTARS) form the signal peptide. An IGFBP N-terminal domain is found at 24 to 105 (MVFRCPSCTA…VQGLGRCGRK (82 aa)). Intrachain disulfides connect cysteine 28–cysteine 55, cysteine 31–cysteine 57, cysteine 39–cysteine 58, cysteine 46–cysteine 61, cysteine 69–cysteine 82, cysteine 76–cysteine 102, cysteine 180–cysteine 214, cysteine 225–cysteine 236, and cysteine 238–cysteine 259. In terms of domain architecture, Thyroglobulin type-1 spans 177 to 259 (QSQCQQELDQ…SPLIRGDPNC (83 aa)). A Cell attachment site motif is present at residues 254–256 (RGD).

In terms of assembly, interacts equally well with igf1 and igf2. As to expression, in embryos at 24 hpf, initially expressed in the lens and cranial region, and at 48 and 72 hpf in the brain boundary vasculature. Expression in these regions persists throughout the hatching period and by 96 hpf expression is most abundant in the liver. In both male and female adults, highest expression is in the liver with modest expression in the brain. In male but not females adults, expressed at a low level in muscle and gonad. Also expressed in the adult intestine.

It is found in the secreted. Functionally, IGF-binding proteins prolong the half-life of the IGFs and have been shown to either inhibit or stimulate the growth promoting effects of the IGFs on cell culture. They alter the interaction of IGFs with their cell surface receptors. In Danio rerio (Zebrafish), this protein is Insulin-like growth factor-binding protein 2-A (igfbp2a).